The sequence spans 70 residues: Small ribosomal subunit protein bS21 (70 aa).

The protein belongs to the bacterial ribosomal protein bS21 family.

The protein is Small ribosomal subunit protein bS21 of Methylobacillus flagellatus (strain ATCC 51484 / DSM 6875 / VKM B-1610 / KT).